A 444-amino-acid polypeptide reads, in one-letter code: Ribosomal protein uS12 methylthiotransferase RimO (444 aa).

Positions 6–116 (PNIGFVSLGC…VMEHVHKYVP (111 aa)) constitute an MTTase N-terminal domain. 6 residues coordinate [4Fe-4S] cluster: C15, C51, C80, C148, C152, and C155. The Radical SAM core domain maps to 134–375 (LTPKHYAYLK…MQLQQEISAA (242 aa)). The region spanning 378-444 (QQKIGKTWKV…ADEYDLWGTC (67 aa)) is the TRAM domain.

The protein belongs to the methylthiotransferase family. RimO subfamily. The cofactor is [4Fe-4S] cluster.

It localises to the cytoplasm. The catalysed reaction is L-aspartate(89)-[ribosomal protein uS12]-hydrogen + (sulfur carrier)-SH + AH2 + 2 S-adenosyl-L-methionine = 3-methylsulfanyl-L-aspartate(89)-[ribosomal protein uS12]-hydrogen + (sulfur carrier)-H + 5'-deoxyadenosine + L-methionine + A + S-adenosyl-L-homocysteine + 2 H(+). Catalyzes the methylthiolation of an aspartic acid residue of ribosomal protein uS12. The chain is Ribosomal protein uS12 methylthiotransferase RimO from Actinobacillus succinogenes (strain ATCC 55618 / DSM 22257 / CCUG 43843 / 130Z).